The chain runs to 333 residues: Na(+)/H(+) exchange regulatory cofactor NHE-RF1 (333 aa).

Residues 13-93 (LCCMEKGPDG…AVRLLVVQPQ (81 aa)) enclose the PDZ 1 domain. Disordered stretches follow at residues 90 to 164 (VQPQ…RAVD) and 232 to 333 (LAGP…FSNL). Residues 97–111 (QPPKTHSDPDGEAQR) are compositionally biased toward basic and acidic residues. Residues 112-122 (EPPAAETPAAE) are compositionally biased toward low complexity. Residues 124-133 (SGPEERELRP) are compositionally biased toward basic and acidic residues. One can recognise a PDZ 2 domain in the interval 135–215 (LCRIKKGPNG…ETKLLVVGVL (81 aa)). Composition is skewed to basic and acidic residues over residues 274 to 289 (SETH…DKRS) and 323 to 333 (WSKKNELFSNL).

It is found in the endomembrane system. The protein resides in the cell projection. Its subcellular location is the filopodium. The protein localises to the ruffle. It localises to the microvillus. Its function is as follows. Scaffold protein that connects plasma membrane proteins with members of the ezrin/moesin/radixin family and thereby helps to link them to the actin cytoskeleton and to regulate their surface expression. Was first known to play a role in the regulation of the activity and subcellular location of SLC9A3. May enhance Wnt signaling. The sequence is that of Na(+)/H(+) exchange regulatory cofactor NHE-RF1 (NHERF1) from Gallus gallus (Chicken).